We begin with the raw amino-acid sequence, 277 residues long: 2-dehydro-3-deoxyphosphooctonate aldolase (277 aa).

Belongs to the KdsA family.

It is found in the cytoplasm. The catalysed reaction is D-arabinose 5-phosphate + phosphoenolpyruvate + H2O = 3-deoxy-alpha-D-manno-2-octulosonate-8-phosphate + phosphate. It functions in the pathway carbohydrate biosynthesis; 3-deoxy-D-manno-octulosonate biosynthesis; 3-deoxy-D-manno-octulosonate from D-ribulose 5-phosphate: step 2/3. The protein operates within bacterial outer membrane biogenesis; lipopolysaccharide biosynthesis. This Brucella anthropi (strain ATCC 49188 / DSM 6882 / CCUG 24695 / JCM 21032 / LMG 3331 / NBRC 15819 / NCTC 12168 / Alc 37) (Ochrobactrum anthropi) protein is 2-dehydro-3-deoxyphosphooctonate aldolase.